The primary structure comprises 451 residues: MGRRYFGTDGIRGTVGDAPITPDFVLRLGYAAGKVLAGSADVAAGSRPTVLIGKDTRVSGYMLEAALEAGFSAAGVDVMLAGPMPTPGVAYLTRALRLSAGVVISASHNPYHDNGIKFFSADGNKLPDDTEAAIEAWLEKPLECAASDGLGKARRLDDAAGRYIEFCKSTFPAAFNLRGLKLVIDCAHGAAYQIAPHVFHELGADVIPIGVAPNGFNINDGVGATAPDALVRAVRANHADLGIALDGDADRLQVVDAAGRLYNGDELLYVLVKDRIVTDGKVEGAVGTLMTNLAVEVALQREGVKFVRAAVGDRYVLEQLREHGWQLGAEGSGHILSLDRHSTGDGIVSALLVLAALKRSGRTLAQMLDGVTLFPQKLINVRMKPGADWKGSASIRAAIDAAEAALAGSGRVLIRASGTEPVLRVMVEAQQAADAVRHAETIADAVRAATT.

Ser107 acts as the Phosphoserine intermediate in catalysis. The Mg(2+) site is built by Ser107, Asp246, Asp248, and Asp250. Ser107 bears the Phosphoserine mark.

This sequence belongs to the phosphohexose mutase family. Requires Mg(2+) as cofactor. In terms of processing, activated by phosphorylation.

The enzyme catalyses alpha-D-glucosamine 1-phosphate = D-glucosamine 6-phosphate. Catalyzes the conversion of glucosamine-6-phosphate to glucosamine-1-phosphate. The sequence is that of Phosphoglucosamine mutase from Burkholderia cenocepacia (strain ATCC BAA-245 / DSM 16553 / LMG 16656 / NCTC 13227 / J2315 / CF5610) (Burkholderia cepacia (strain J2315)).